We begin with the raw amino-acid sequence, 135 residues long: Putative pre-16S rRNA nuclease (135 aa).

The protein belongs to the YqgF nuclease family.

It localises to the cytoplasm. In terms of biological role, could be a nuclease involved in processing of the 5'-end of pre-16S rRNA. The sequence is that of Putative pre-16S rRNA nuclease from Clostridium acetobutylicum (strain ATCC 824 / DSM 792 / JCM 1419 / IAM 19013 / LMG 5710 / NBRC 13948 / NRRL B-527 / VKM B-1787 / 2291 / W).